The primary structure comprises 418 residues: MKLGDWKFCLLLFQLMFLTNVCLSDLSFNPYKWPVNQLRRVIGAVKVTNTSNYFGFSLYENLNSNGNVFISPYSLASVMAMLYLGARGVTKNEMDLTLGYNSVNLNSEDLVLGFQQSLLLLNAESKEYQLETANSLMIQNTFNILDNYKRMLEDKFGANVQDVDFINKAELVQRYINAWVAFKTKNKIPILLNEPLKPETRLAFFNAVYFKGVWETKFDSALTRRATFYNNGYVPTQVPMMMLRGIFPFAYVSSLRSYVLELPYKGHEVSMLLLLPKDRNGISDLERDLSSSSLDSVTSNLREIGVLVTIPKFKLEETYEDDLKQSLESMGMTSLFSEANANLEGITGHRDLFVTKITHRTLIEVNEEGTEASGISSVVAGVRSGWKRPTFTADHPFVFFIRHNRSGIILFMGRVSQL.

The signal sequence occupies residues 1-24 (MKLGDWKFCLLLFQLMFLTNVCLS). 2 N-linked (GlcNAc...) asparagine glycosylation sites follow: asparagine 49 and asparagine 404.

It belongs to the serpin family. Monomer. Forms a covalent heterodimer with clotting factor C. Interacts with big defensin. Post-translationally, N-glycosylated. Expressed in hemocytes (at protein level).

It is found in the secreted. In terms of biological role, serine protease inhibitor that specifically inhibits clotting factor C. Does not inhibit clotting factor B or proclotting enzyme. This chain is Intracellular coagulation inhibitor 1, found in Tachypleus tridentatus (Japanese horseshoe crab).